A 651-amino-acid polypeptide reads, in one-letter code: Acetyl-coenzyme A synthetase (651 aa).

CoA contacts are provided by residues 189-192, Thr-311, and Asn-335; that span reads RGGK. ATP is bound by residues 387–389, 411–416, Asp-500, and Arg-515; these read GEP and DTWWQT. Residue Ser-523 coordinates CoA. Arg-526 provides a ligand contact to ATP. Mg(2+)-binding residues include Val-537, His-539, and Val-542. A CoA-binding site is contributed by Arg-584. Lys-609 is subject to N6-acetyllysine.

This sequence belongs to the ATP-dependent AMP-binding enzyme family. The cofactor is Mg(2+). Post-translationally, acetylated. Deacetylation by the SIR2-homolog deacetylase activates the enzyme.

It carries out the reaction acetate + ATP + CoA = acetyl-CoA + AMP + diphosphate. In terms of biological role, catalyzes the conversion of acetate into acetyl-CoA (AcCoA), an essential intermediate at the junction of anabolic and catabolic pathways. AcsA undergoes a two-step reaction. In the first half reaction, AcsA combines acetate with ATP to form acetyl-adenylate (AcAMP) intermediate. In the second half reaction, it can then transfer the acetyl group from AcAMP to the sulfhydryl group of CoA, forming the product AcCoA. In Rhizobium leguminosarum bv. trifolii (strain WSM2304), this protein is Acetyl-coenzyme A synthetase.